A 407-amino-acid chain; its full sequence is Snake venom metalloproteinase ACLH (407 aa).

A signal peptide spans Met1–Ser20. The propeptide occupies Ile21 to Leu187. The 197-residue stretch at Arg193–Pro389 folds into the Peptidase M12B domain. The Ca(2+) site is built by Glu196 and Asp280. 3 cysteine pairs are disulfide-bonded: Cys304–Cys384, Cys344–Cys368, and Cys346–Cys351. His329 serves as a coordination point for Zn(2+). Glu330 is an active-site residue. 2 residues coordinate Zn(2+): His333 and His339. An N-linked (GlcNAc...) asparagine glycan is attached at Asn367. 2 residues coordinate Ca(2+): Cys384 and Asn387.

This sequence belongs to the venom metalloproteinase (M12B) family. P-I subfamily. Monomer. The cofactor is Zn(2+). In terms of processing, contains sialic acid terminally alpha(2-6)-linked to galactose in a complex N-glycan chain. Expressed by the venom gland.

The protein resides in the secreted. Functionally, this zinc hemorrhagic metalloproteinase has fibrino(geno)lytic activities. It causes hemorrhage and has myonecrotic activity on both fiber types I and II. The recombinant enzyme, without post-translational modifications, also has proteolytic activity, but does not show any hemorrhagic activity. The protein is Snake venom metalloproteinase ACLH of Agkistrodon contortrix laticinctus (Broad-banded copperhead).